Consider the following 24-residue polypeptide: Humanin-like 11 (24 aa).

The protein belongs to the humanin family.

It is found in the secreted. It localises to the cytoplasm. Functionally, plays a role as a neuroprotective and antiapoptotic factor. This is Humanin-like 11 from Homo sapiens (Human).